A 303-amino-acid chain; its full sequence is Quinolinate synthase (303 aa).

2 residues coordinate iminosuccinate: histidine 23 and serine 40. Cysteine 85 provides a ligand contact to [4Fe-4S] cluster. Iminosuccinate is bound by residues 111 to 113 and serine 128; that span reads YVN. Position 171 (cysteine 171) interacts with [4Fe-4S] cluster. Iminosuccinate is bound by residues 197–199 and threonine 214; that span reads HPE. Cysteine 259 contributes to the [4Fe-4S] cluster binding site.

Belongs to the quinolinate synthase family. Type 2 subfamily. It depends on [4Fe-4S] cluster as a cofactor.

It localises to the cytoplasm. The enzyme catalyses iminosuccinate + dihydroxyacetone phosphate = quinolinate + phosphate + 2 H2O + H(+). The protein operates within cofactor biosynthesis; NAD(+) biosynthesis; quinolinate from iminoaspartate: step 1/1. Its function is as follows. Catalyzes the condensation of iminoaspartate with dihydroxyacetone phosphate to form quinolinate. This is Quinolinate synthase from Thermodesulfovibrio yellowstonii (strain ATCC 51303 / DSM 11347 / YP87).